Reading from the N-terminus, the 510-residue chain is GMP synthase [glutamine-hydrolyzing] (510 aa).

One can recognise a Glutamine amidotransferase type-1 domain in the interval 5–195 (LVIVVDFGGQ…LFDICNLKGD (191 aa)). The active-site Nucleophile is Cys82. Catalysis depends on residues His169 and Glu171. The region spanning 196 to 385 (WSMSSFVDEK…LGIPHKLVWR (190 aa)) is the GMPS ATP-PPase domain. 223 to 229 (SGGVDSS) lines the ATP pocket.

In terms of assembly, homodimer.

It carries out the reaction XMP + L-glutamine + ATP + H2O = GMP + L-glutamate + AMP + diphosphate + 2 H(+). The protein operates within purine metabolism; GMP biosynthesis; GMP from XMP (L-Gln route): step 1/1. Its function is as follows. Catalyzes the synthesis of GMP from XMP. This Clostridium kluyveri (strain NBRC 12016) protein is GMP synthase [glutamine-hydrolyzing].